The chain runs to 344 residues: Beta-1,4-galactosyltransferase 4 (344 aa).

The Cytoplasmic portion of the chain corresponds to 1–12 (MGFNLTFHLSYK). The chain crosses the membrane as a helical; Signal-anchor for type II membrane protein span at residues 13-38 (FRLLLLLTLCLTVVGWATSNYFVGAI). Residues 39-344 (QEIPKAKEFM…NITVDFWFGA (306 aa)) are Lumenal-facing. Cys77 and Cys118 are disulfide-bonded. UDP-alpha-D-galactose is bound by residues 129 to 133 (PHRNR), 168 to 170 (FNR), and 195 to 196 (VD). Residues Cys189 and Cys208 are joined by a disulfide bond. Asp196 serves as a coordination point for Mn(2+). The N-linked (GlcNAc...) asparagine glycan is linked to Asn220. Tyr224 and Trp256 together coordinate UDP-alpha-D-galactose. 258 to 261 (GEDD) provides a ligand contact to N-acetyl-D-glucosamine. His289 serves as a coordination point for Mn(2+). 289–291 (HTR) contributes to the UDP-alpha-D-galactose binding site. N-acetyl-D-glucosamine is bound at residue Arg301. N-linked (GlcNAc...) asparagine glycosylation occurs at Asn335.

It belongs to the glycosyltransferase 7 family. As to quaternary structure, interacts with SLC35A2 (isoform 2; UGT1). Requires Mn(2+) as cofactor. In terms of processing, N-glycosylated. Highest expression is observed in placenta, pancreas, kidney and heart. Expressed in corneal epithelial cells.

The protein localises to the golgi apparatus membrane. Its subcellular location is the secreted. The catalysed reaction is N-acetyl-D-glucosamine + UDP-alpha-D-galactose = beta-D-galactosyl-(1-&gt;4)-N-acetyl-D-glucosamine + UDP + H(+). The enzyme catalyses a beta-D-GlcNAc-(1-&gt;3)-beta-D-Gal-(1-&gt;4)-beta-D-Glc-(1&lt;-&gt;1)-Cer(d18:1(4E)) + UDP-alpha-D-galactose = a neolactoside nLc4Cer(d18:1(4E)) + UDP + H(+). It catalyses the reaction 3-O-{beta-D-galactosyl-(1-&gt;3)-[6-O-sulfo-N-acetyl-beta-D-glucosaminyl-(1-&gt;6)]-N-acetyl-alpha-D-galactosaminyl}-L-seryl-[protein] + UDP-alpha-D-galactose = 3-O-{beta-D-galactosyl-(1-&gt;3)-[beta-D-galactosyl-(1-&gt;4)-6-O-sulfo-N-acetyl-beta-D-glucosaminyl-(1-&gt;6)]-N-acetyl-alpha-D-galactosaminyl}-L-seryl-[protein] + UDP + H(+). It carries out the reaction 3-O-{beta-D-galactosyl-(1-&gt;3)-[6-O-sulfo-N-acetyl-beta-D-glucosaminyl-(1-&gt;6)]-N-acetyl-alpha-D-galactosaminyl}-L-threonyl-[protein] + UDP-alpha-D-galactose = 3-O-{beta-D-galactosyl-(1-&gt;3)-[beta-D-galactosyl-(1-&gt;4)-6-O-sulfo-N-acetyl-beta-D-glucosaminyl-(1-&gt;6)]-N-acetyl-alpha-D-galactosaminyl}-L-threonyl-[protein] + UDP + H(+). Its pathway is protein modification; protein glycosylation. It participates in glycolipid biosynthesis. With respect to regulation, up-regulated by LALBA. In terms of biological role, galactose (Gal) transferase involved in the synthesis of terminal N-acetyllactosamine (LacNac) unit present on glycan chains of glycoproteins and glycosphingolipids. Catalyzes the transfer of Gal residue via a beta1-&gt;4 linkage from UDP-Gal to the non-reducing terminal N-acetyl glucosamine 6-O-sulfate (6-O-sulfoGlcNAc) in the linearly growing chain of both N- and O-linked keratan sulfate proteoglycans. Cooperates with B3GNT7 N-acetyl glucosamine transferase and CHST6 and CHST1 sulfotransferases to construct and elongate mono- and disulfated disaccharide units [-&gt;3Galbeta1-&gt;4(6-sulfoGlcNAcbeta)1-&gt;] and [-&gt;3(6-sulfoGalbeta)1-&gt;4(6-sulfoGlcNAcbeta)1-&gt;] within keratan sulfate polymer. Transfers Gal residue via a beta1-&gt;4 linkage to terminal 6-O-sulfoGlcNAc within the LacNac unit of core 2 O-glycans forming 6-sulfo-sialyl-Lewis X (sLex). May contribute to the generation of sLex epitope on mucin-type glycoproteins that serve as ligands for SELL/L-selectin, a major regulator of leukocyte migration. In the biosynthesis pathway of neolacto-series glycosphingolipids, transfers Gal residue via a beta1-&gt;4 linkage to terminal GlcNAc of a lactotriaosylceramide (Lc3Cer) acceptor to form a neolactotetraosylceramide. This Homo sapiens (Human) protein is Beta-1,4-galactosyltransferase 4.